Consider the following 280-residue polypeptide: Homeobox protein Hox-B1b (280 aa).

The segment at 46–65 is disordered; sequence GRLAAPTSAPHQSPGLPLHH. The short motif at 170–175 is the Antp-type hexapeptide element; that stretch reads TFDWMK. A DNA-binding region (homeobox) is located at residues 195–254; sequence HNVIRTNFTTKQLTELEKEFHFNKYLTRARRVEVAASLELNETQVKIWFQNRRMKQKKRE. Positions 249–280 are disordered; sequence KQKKREKLGGVLVHREKASGPESSPKAKESEP. Positions 261–280 are enriched in basic and acidic residues; it reads VHREKASGPESSPKAKESEP.

It belongs to the Antp homeobox family. Labial subfamily.

Its subcellular location is the nucleus. Functionally, sequence-specific transcription factor which is part of a developmental regulatory system that provides cells with specific positional identities on the anterior-posterior axis. This is Homeobox protein Hox-B1b (hoxb1b) from Takifugu rubripes (Japanese pufferfish).